The primary structure comprises 1633 residues: Serine-aspartate repeat-containing protein F (1633 aa).

The first 45 residues, 1 to 45 (MKKRRQGPINKRVDFLSNKVNKYSIRKFTVGTASILVGATLMFGA), serve as a signal peptide directing secretion. Positions 46–678 (ADNEAKAAED…GSSTAQGDNP (633 aa)) are ligand binding A region. The disordered stretch occupies residues 51 to 269 (KAAEDNQLES…SISTDSSVND (219 aa)). Residues 61 to 74 (ASKEEQKGSRDNES) are compositionally biased toward basic and acidic residues. 2 stretches are compositionally biased toward polar residues: residues 85–99 (GSHS…NNAT) and 146–168 (PKTS…DNLN). Residues 175 to 184 (KESKTDEHST) show a composition bias toward basic and acidic residues. Residues 186 to 226 (QAQMSTNKSNLDTNDSPTQSEKTSSQANNDSTDNQSAPSKQ) are compositionally biased toward polar residues. Residues 227 to 253 (LDSKPSEQKVYKTKFNDEPTQDVEHTT) show a composition bias toward basic and acidic residues. Polar residues predominate over residues 255 to 266 (KLKTPSISTDSS). CNA-B domains are found at residues 679 to 797 (TYSL…YLTP), 798 to 907 (KYNV…FYKP), 908 to 1018 (IYNL…YKTP), and 1019 to 1129 (KYSV…FDDD). Residues 679 to 1129 (TYSLGDYVWL…SIDNGYFDDD (451 aa)) form a type I collagen binding region region. Positions 862 to 889 (FETPEGYTPTKQNSGSDEGKDSNGTKTT) are disordered. Positions 1085–1608 (KPEGMTQTTA…ANEDHDSKGT (524 aa)) are disordered. The segment covering 1107 to 1119 (EDVRVTITDHDDF) has biased composition (basic and acidic residues). Residues 1125–1584 (YFDDDSDSDS…DSDSDSDSDS (460 aa)) show a composition bias toward acidic residues. A compositionally biased stretch (basic and acidic residues) spans 1585–1606 (DSDKNAKDKLPDTGANEDHDSK). The LPXTG sorting signal motif lies at 1594 to 1598 (LPDTG). Thr1597 is modified (pentaglycyl murein peptidoglycan amidated threonine). The propeptide at 1598–1633 (GANEDHDSKGTLLGTLFAGLGALLLGRRRKKDNKEK) is removed by sortase.

This sequence belongs to the serine-aspartate repeat-containing protein (SDr) family.

It localises to the secreted. The protein localises to the cell wall. Its function is as follows. Binds to type I collagen via alpha-2(I) or alpha-1(I) chains. This is Serine-aspartate repeat-containing protein F (sdrF) from Staphylococcus epidermidis (strain ATCC 12228 / FDA PCI 1200).